The following is a 264-amino-acid chain: Putative serine carboxypeptidase-like 53 (264 aa).

The signal sequence occupies residues Met-1–Thr-23. N-linked (GlcNAc...) asparagine glycans are attached at residues Asn-65, Asn-101, Asn-153, and Asn-184.

Belongs to the peptidase S10 family.

It localises to the secreted. This chain is Putative serine carboxypeptidase-like 53 (SCPL53), found in Arabidopsis thaliana (Mouse-ear cress).